Here is a 376-residue protein sequence, read N- to C-terminus: Peroxisomal membrane protein PEX14 (376 aa).

Over residues 1 to 12 (MASSEQAEQPNQ) the composition is skewed to polar residues. The segment at 1–24 (MASSEQAEQPNQPSSPPGSENVVP) is disordered. An N-acetylalanine modification is found at Ala-2. At 2-108 (ASSEQAEQPN…YSPRGSRWRD (107 aa)) the chain is on the peroxisomal side. Position 34 is an N6-acetyllysine (Lys-34). The interval 70–102 (SGTAADEPSPLGPATPVVPVQPPHLTPQPYSPR) is disordered. Residues 88-99 (PVQPPHLTPQPY) show a composition bias toward pro residues. A helical transmembrane segment spans residues 109 to 127 (YGALAIIMAGIAFGFHQLY). Residues 128–376 (KRYLLPLILG…EGASNETERD (249 aa)) lie on the Cytoplasmic side of the membrane. The tract at residues 230–376 (PPSPSAPKIP…EGASNETERD (147 aa)) is disordered. Phosphoserine is present on Ser-232. Low complexity-rich tracts occupy residues 247-259 (SSSP…VNHH) and 265-275 (SPVSNESTSSS). A phosphoserine mark is found at Ser-282 and Ser-334. Residues 323–341 (KEDEDDEDDDVSHVDEEDV) show a composition bias toward acidic residues. Positions 359–376 (QVEKLRRPEGASNETERD) are enriched in basic and acidic residues.

It belongs to the peroxin-14 family. As to quaternary structure, interacts with PEX13; forming the PEX13-PEX14 docking complex. Interacts with PEX5 (via WxxxF/Y motifs). Interacts with PEX19. Interacts with tubulin.

Its subcellular location is the peroxisome membrane. Its function is as follows. Component of the PEX13-PEX14 docking complex, a translocon channel that specifically mediates the import of peroxisomal cargo proteins bound to PEX5 receptor. The PEX13-PEX14 docking complex forms a large import pore which can be opened to a diameter of about 9 nm. Mechanistically, PEX5 receptor along with cargo proteins associates with the PEX14 subunit of the PEX13-PEX14 docking complex in the cytosol, leading to the insertion of the receptor into the organelle membrane with the concomitant translocation of the cargo into the peroxisome matrix. Plays a key role for peroxisome movement through a direct interaction with tubulin. The protein is Peroxisomal membrane protein PEX14 of Mus musculus (Mouse).